Here is a 351-residue protein sequence, read N- to C-terminus: tRNA pseudouridine synthase D (351 aa).

The active-site Nucleophile is the aspartate 96. Residues 174–304 form the TRUD domain; it reads GAPNYFGPQR…MKPERRPLVA (131 aa). Residues 244–268 are disordered; that stretch reads VLPGEPEPSGAGPTGPLWGDGGTLA.

Belongs to the pseudouridine synthase TruD family.

The enzyme catalyses uridine(13) in tRNA = pseudouridine(13) in tRNA. In terms of biological role, responsible for synthesis of pseudouridine from uracil-13 in transfer RNAs. This Marinobacter nauticus (strain ATCC 700491 / DSM 11845 / VT8) (Marinobacter aquaeolei) protein is tRNA pseudouridine synthase D.